A 92-amino-acid polypeptide reads, in one-letter code: C-C motif chemokine 3 (92 aa).

The signal sequence occupies residues 1–23 (MKVSTTALAVLLCTMTLCNQVFS). Disulfide bonds link Cys34/Cys57 and Cys35/Cys73.

It belongs to the intercrine beta (chemokine CC) family. Self-associates. Also heterodimer of MIP-1-alpha(4-69) and MIP-1-beta(3-69). Interacts with CCR1. In terms of tissue distribution, expressed in lung, spleen, and pancreas.

Its subcellular location is the secreted. In terms of biological role, monokine with inflammatory and chemokinetic properties. Binds to CCR1, CCR4 and CCR5. One of the major HIV-suppressive factors produced by CD8+ T-cells. Recombinant MIP-1-alpha induces a dose-dependent inhibition of different strains of HIV-1, HIV-2, and simian immunodeficiency virus (SIV). This is C-C motif chemokine 3 (Ccl3) from Mus musculus (Mouse).